Here is a 236-residue protein sequence, read N- to C-terminus: Small ribosomal subunit protein uS2c (236 aa).

The protein belongs to the universal ribosomal protein uS2 family.

The protein localises to the plastid. Its subcellular location is the chloroplast. This Coffea arabica (Arabian coffee) protein is Small ribosomal subunit protein uS2c (rps2).